The sequence spans 184 residues: Ribosome-recycling factor (184 aa).

The protein belongs to the RRF family.

The protein resides in the cytoplasm. Responsible for the release of ribosomes from messenger RNA at the termination of protein biosynthesis. May increase the efficiency of translation by recycling ribosomes from one round of translation to another. The chain is Ribosome-recycling factor from Onion yellows phytoplasma (strain OY-M).